The following is a 440-amino-acid chain: Alpha-ionylideneethane synthase aba3 (440 aa).

Belongs to the alpha-ionylideneethane synthase family.

The protein operates within hormone biosynthesis. Alpha-ionylideneethane synthase; part of the gene cluster that mediates the biosynthesis of abscisic acid (ABA), a phytohormone that acts antagonistically toward salicylic acid (SA), jasmonic acid (JA) and ethylene (ETH) signaling, to impede plant defense responses. The first step of the pathway catalyzes the reaction from farnesyl diphosphate to alpha-ionylideneethane performed by the alpha-ionylideneethane synthase aba3 via a three-step reaction mechanism involving 2 neutral intermediates, beta-farnesene and allofarnesene. The cytochrome P450 monooxygenase aba1 might then be involved in the conversion of alpha-ionylideneethane to alpha-ionylideneacetic acid. Alpha-ionylideneacetic acid is further converted to abscisic acid in 2 steps involving the cytochrome P450 monooxygenase aba2 and the short-chain dehydrogenase/reductase aba4, via the intermediates 1'-deoxy-ABA or 1',4'-trans-diol-ABA, depending on the order of action of these 2 enzymes. Aba2 is responsible for the hydroxylation of carbon atom C-1' and aba4 might be involved in the oxidation of the C-4' carbon atom. In Botryotinia fuckeliana (strain B05.10) (Noble rot fungus), this protein is Alpha-ionylideneethane synthase aba3.